The sequence spans 333 residues: MASVMQKLITPLCSGPQRPRNKVTVVGVGQVGMACAVSILMRELADELALVDVIEDKLKGEMMDLQHGSLFLKTSKIVADKDYSVSANSRIVVVTAGVRHREGESRLNLVQRNVNIFKHIIPQIVKYSPDCILVVVSNPVDVLTYVTWKLSGLPKHRVIGSGTNLDSARFRYLMAEKLGIHSSSFNGWILGEHGDSSVPVWSGANVAGVNLQKLNPDIGTDADKENWKDAHKMVVESAYEVIRLKGYTNWAIGLSVADLAETLIKNLNRIHPVSTMVKGMYGIGDEVYLSLPCVLNNGGVNSVVNMTLTDEEIAQLKKSADTLWGIQKDLKDL.

Residues 29-57 (GQVG…IEDK) and R99 each bind NAD(+). Residues R106, N138, and R169 each coordinate substrate. N138 is an NAD(+) binding site. The active-site Proton acceptor is H193. Substrate is bound at residue T248.

This sequence belongs to the LDH/MDH superfamily. LDH family. As to quaternary structure, homotetramer.

It localises to the cytoplasm. The catalysed reaction is (S)-lactate + NAD(+) = pyruvate + NADH + H(+). The protein operates within fermentation; pyruvate fermentation to lactate; (S)-lactate from pyruvate: step 1/1. Its function is as follows. Interconverts simultaneously and stereospecifically pyruvate and lactate with concomitant interconversion of NADH and NAD(+). This is L-lactate dehydrogenase B chain (ldhb) from Anguilla rostrata (American eel).